We begin with the raw amino-acid sequence, 360 residues long: DNA replication and repair protein RecF (360 aa).

An ATP-binding site is contributed by 30-37; the sequence is GQNGSGKT.

Belongs to the RecF family.

Its subcellular location is the cytoplasm. Its function is as follows. The RecF protein is involved in DNA metabolism; it is required for DNA replication and normal SOS inducibility. RecF binds preferentially to single-stranded, linear DNA. It also seems to bind ATP. In Shewanella oneidensis (strain ATCC 700550 / JCM 31522 / CIP 106686 / LMG 19005 / NCIMB 14063 / MR-1), this protein is DNA replication and repair protein RecF.